Reading from the N-terminus, the 229-residue chain is uncharacterized protein (229 aa).

To T.pallidum TP_0315, TP_0618 and TP_0619.

This is an uncharacterized protein from Treponema pallidum (strain Nichols).